An 86-amino-acid chain; its full sequence is Small ribosomal subunit protein uS17 (86 aa).

Belongs to the universal ribosomal protein uS17 family. As to quaternary structure, part of the 30S ribosomal subunit.

One of the primary rRNA binding proteins, it binds specifically to the 5'-end of 16S ribosomal RNA. This is Small ribosomal subunit protein uS17 from Rhizorhabdus wittichii (strain DSM 6014 / CCUG 31198 / JCM 15750 / NBRC 105917 / EY 4224 / RW1) (Sphingomonas wittichii).